We begin with the raw amino-acid sequence, 61 residues long: Small ribosomal subunit protein uS14 (61 aa).

Residues cysteine 24, cysteine 27, cysteine 40, and cysteine 43 each contribute to the Zn(2+) site.

The protein belongs to the universal ribosomal protein uS14 family. Zinc-binding uS14 subfamily. Part of the 30S ribosomal subunit. Contacts proteins S3 and S10. The cofactor is Zn(2+).

Binds 16S rRNA, required for the assembly of 30S particles and may also be responsible for determining the conformation of the 16S rRNA at the A site. The sequence is that of Small ribosomal subunit protein uS14 from Thermotoga neapolitana (strain ATCC 49049 / DSM 4359 / NBRC 107923 / NS-E).